Consider the following 92-residue polypeptide: Transcription factor PRE5 (92 aa).

The 56-residue stretch at 4-59 (RRSRQTSNASRISDDQMIDLVSKLRQFLPEIHERRRSDKVSASKVLQETCNYIRKL) folds into the bHLH domain.

It belongs to the bHLH protein family. Interacts with IBH1.

It is found in the nucleus. Its function is as follows. Atypical and probable non DNA-binding bHLH transcription factor that integrates multiple signaling pathways to regulate cell elongation and plant development. May have a regulatory role in various aspects of gibberellin-dependent growth and development. This Arabidopsis thaliana (Mouse-ear cress) protein is Transcription factor PRE5 (PRE5).